A 434-amino-acid chain; its full sequence is Gamma-enolase (434 aa).

An N-acetylserine modification is found at S2. Position 5 is an N6-acetyllysine (K5). A Phosphothreonine modification is found at T26. S40 lines the Mg(2+) pocket. Position 44 is a phosphotyrosine (Y44). An N6-acetyllysine; alternate modification is found at K60. At K60 the chain carries N6-succinyllysine; alternate. Position 64 is an N6-acetyllysine (K64). The residue at position 89 (K89) is an N6-acetyllysine; alternate. K89 carries the post-translational modification N6-succinyllysine; alternate. Substrate is bound by residues H158 and E167. K193, K197, and K199 each carry N6-acetyllysine. K202 is modified (N6-acetyllysine; alternate). K202 is covalently cross-linked (Glycyl lysine isopeptide (Lys-Gly) (interchain with G-Cter in SUMO2); alternate). E210 acts as the Proton donor in catalysis. N6-acetyllysine; alternate is present on residues K228 and K233. K228 bears the N6-succinyllysine; alternate mark. At K233 the chain carries N6-(2-hydroxyisobutyryl)lysine; alternate. Residue D245 coordinates Mg(2+). The residue at position 256 (K256) is an N6-acetyllysine. Residue S263 is modified to Phosphoserine. At Y287 the chain carries Phosphotyrosine. S291 is subject to Phosphoserine. Positions 293 and 318 each coordinate Mg(2+). Substrate is bound by residues E293 and D318. N6-acetyllysine occurs at positions 335 and 343. Residue K343 is the Proton acceptor of the active site. Residues 370 to 373 (SHRS) and K394 each bind substrate. Position 406 is an N6-acetyllysine (K406).

The protein belongs to the enolase family. Mammalian enolase is composed of 3 isozyme subunits, alpha, beta and gamma, which can form homodimers or heterodimers which are cell-type and development-specific. Mg(2+) serves as cofactor. As to expression, skeletal muscle (at protein level). The alpha/alpha homodimer is expressed in embryo and in most adult tissues. The alpha/beta heterodimer and the beta/beta homodimer are found in striated muscle, and the alpha/gamma heterodimer and the gamma/gamma homodimer in neurons.

It is found in the cytoplasm. It localises to the cell membrane. The enzyme catalyses (2R)-2-phosphoglycerate = phosphoenolpyruvate + H2O. It functions in the pathway carbohydrate degradation; glycolysis; pyruvate from D-glyceraldehyde 3-phosphate: step 4/5. Functionally, has neurotrophic and neuroprotective properties on a broad spectrum of central nervous system (CNS) neurons. Binds, in a calcium-dependent manner, to cultured neocortical neurons and promotes cell survival. This chain is Gamma-enolase (Eno2), found in Mus musculus (Mouse).